Reading from the N-terminus, the 248-residue chain is MVDRVKTGIPGMDDILYGGIPRRNVVLLSGGPGTGKSIFSYQYLWNGLREGEPGVFVALEEHPVQVRINMAQFGWDVREYERQGLFAVVDAFTSGIGEAAKKERYVVTDPEDVGLLIDVLKEAIRDVGAKRVAVDSVSTLYLAKPVLARRTVMLLKRVLSGLGTTSILVSQVSVTERGFGGPGVEHAADGIIRLDLDEVDGELVRSLIIWKMRGTKHSMRRHPFEITDKGIIVYPDKVVRIGRRVSIE.

In terms of domain architecture, KaiC spans 3 to 247; it reads DRVKTGIPGM…VVRIGRRVSI (245 aa). An ATP-binding site is contributed by 30 to 37; it reads GGPGTGKS.

Belongs to the UPF0273 family.

This is UPF0273 protein APE_1505.1 from Aeropyrum pernix (strain ATCC 700893 / DSM 11879 / JCM 9820 / NBRC 100138 / K1).